The chain runs to 342 residues: Serpentine receptor class gamma-69 (342 aa).

The next 7 membrane-spanning stretches (helical) occupy residues 11-31, 51-71, 106-126, 140-160, 191-211, 222-242, and 269-289; these read MAGLIGIYAFQGFYGLLSVVV, SLLYTCCAALSLTYFLDHFLI, PIAILVFHALIAAHRFSIVAA, LFVLVGFLIPLIFMWFMIPCK, IAAVLFGVLTLCLTFGMLIAL, AEISLIVFEVFMTVFTLIYAF, and FAIDIFILPQAWTLLFLSTTV.

It belongs to the nematode receptor-like protein srg family.

It is found in the membrane. The chain is Serpentine receptor class gamma-69 (srg-69) from Caenorhabditis elegans.